Consider the following 109-residue polypeptide: Movement protein TGB2 (109 aa).

At 1 to 9 (MPLTPPPDF) the chain is on the cytoplasmic side. A helical membrane pass occupies residues 10–30 (TKVYLSAALGVSLALVVWLLI). Residues 31 to 72 (RSTLPVVGDRDHNLPHGGWYRDGTKSVFYNSPGRLNSIEARK) lie on the Lumenal side of the membrane. A helical transmembrane segment spans residues 73–93 (APLLGQPWAIVVLLVLLIWAS). Topologically, residues 94–109 (HKLGRPNCRACAGSHT) are cytoplasmic.

The protein belongs to the Tymovirales TGBp2 protein family.

It is found in the host endoplasmic reticulum membrane. In terms of biological role, plays a role in viral cell-to-cell propagation, by facilitating genome transport to neighboring plant cells through plasmosdesmata,. The protein is Movement protein TGB2 of Solanum tuberosum (Potato).